The following is a 340-amino-acid chain: tRNA N6-adenosine threonylcarbamoyltransferase (340 aa).

The Fe cation site is built by His113 and His117. Residues 135–139 (LVSGG), Asp169, Gly182, Asp186, and Asn274 each bind substrate. Fe cation is bound at residue Asp302.

This sequence belongs to the KAE1 / TsaD family. Requires Fe(2+) as cofactor.

The protein resides in the cytoplasm. It carries out the reaction L-threonylcarbamoyladenylate + adenosine(37) in tRNA = N(6)-L-threonylcarbamoyladenosine(37) in tRNA + AMP + H(+). Its function is as follows. Required for the formation of a threonylcarbamoyl group on adenosine at position 37 (t(6)A37) in tRNAs that read codons beginning with adenine. Is involved in the transfer of the threonylcarbamoyl moiety of threonylcarbamoyl-AMP (TC-AMP) to the N6 group of A37, together with TsaE and TsaB. TsaD likely plays a direct catalytic role in this reaction. The polypeptide is tRNA N6-adenosine threonylcarbamoyltransferase (Mycolicibacterium gilvum (strain PYR-GCK) (Mycobacterium gilvum (strain PYR-GCK))).